A 141-amino-acid polypeptide reads, in one-letter code: Auxin-responsive protein SAUR64 (141 aa).

The protein belongs to the ARG7 family.

It is found in the cell membrane. Its function is as follows. May promote auxin-stimulated organ elongation, such as hypocotyls, stamen filaments and petals. The chain is Auxin-responsive protein SAUR64 from Arabidopsis thaliana (Mouse-ear cress).